A 130-amino-acid chain; its full sequence is Guanylate kinase (130 aa).

A Guanylate kinase-like domain is found at 1-130; it reads KIFEDPTTSY…EKIQSRVNEA (130 aa).

This sequence belongs to the guanylate kinase family.

The protein localises to the cytoplasm. The enzyme catalyses GMP + ATP = GDP + ADP. Essential for recycling GMP and indirectly, cGMP. The protein is Guanylate kinase (gmk) of Staphylococcus epidermidis.